A 373-amino-acid chain; its full sequence is Sterol-4-alpha-carboxylate 3-dehydrogenase, decarboxylating (373 aa).

Met-1 bears the N-acetylmethionine mark. The residue at position 22 (Thr-22) is a Phosphothreonine. The active-site Proton acceptor is Tyr-172. Lys-176 serves as a coordination point for NAD(+). Residues 298–318 (WVAYYLALLLSLLVMVISPVI) traverse the membrane as a helical segment. The short motif at 370-373 (RRVK) is the Prevents secretion from ER element.

It belongs to the 3-beta-HSD family. Homodimer. In terms of tissue distribution, brain, heart, liver, lung, kidney, skin and placenta.

The protein resides in the endoplasmic reticulum membrane. Its subcellular location is the lipid droplet. The catalysed reaction is a 3beta-hydroxysteroid-4alpha-carboxylate + NADP(+) = a 3-oxosteroid + CO2 + NADPH. It catalyses the reaction a 3beta-hydroxysteroid-4alpha-carboxylate + NAD(+) = a 3-oxosteroid + CO2 + NADH. The enzyme catalyses 4alpha-carboxyzymosterol + NADP(+) = zymosterone + CO2 + NADPH. It carries out the reaction 4alpha-carboxy-4beta-methyl-5alpha-cholest-8-en-3beta-ol + NADP(+) = 4alpha-methyl-5alpha-cholest-8-en-3-one + CO2 + NADPH. The catalysed reaction is 4alpha-carboxy-5alpha-cholest-8-ene-3beta-ol + NADP(+) = 5alpha-cholest-8-en-3-one + CO2 + NADPH. It catalyses the reaction 4beta-methylzymosterol-4alpha-carboxylate + NADP(+) = 3-dehydro-4-methylzymosterol + CO2 + NADPH. The enzyme catalyses 4beta-methylzymosterol-4alpha-carboxylate + NAD(+) = 3-dehydro-4-methylzymosterol + CO2 + NADH. It carries out the reaction 4alpha-carboxy-5alpha-cholest-8-ene-3beta-ol + NAD(+) = 5alpha-cholest-8-en-3-one + CO2 + NADH. The catalysed reaction is 4alpha-carboxy-4beta-methyl-5alpha-cholest-8-en-3beta-ol + NAD(+) = 4alpha-methyl-5alpha-cholest-8-en-3-one + CO2 + NADH. It catalyses the reaction 4alpha-carboxyzymosterol + NAD(+) = zymosterone + CO2 + NADH. Its pathway is steroid biosynthesis; zymosterol biosynthesis; zymosterol from lanosterol: step 4/6. Its function is as follows. Catalyzes the NAD(P)(+)-dependent oxidative decarboxylation of the C4 methyl groups of 4-alpha-carboxysterols in post-squalene cholesterol biosynthesis. Also plays a role in the regulation of the endocytic trafficking of EGFR. The chain is Sterol-4-alpha-carboxylate 3-dehydrogenase, decarboxylating (NSDHL) from Homo sapiens (Human).